Consider the following 272-residue polypeptide: Phosphatidylglycerol--prolipoprotein diacylglyceryl transferase (272 aa).

7 consecutive transmembrane segments (helical) span residues Leu17–Gly37, Met59–Tyr79, Trp95–Phe115, Phe129–Gly149, Ser176–Ala196, Met202–Phe222, and Leu237–Trp257. Arg142 provides a ligand contact to a 1,2-diacyl-sn-glycero-3-phospho-(1'-sn-glycerol).

This sequence belongs to the Lgt family.

It localises to the cell inner membrane. The enzyme catalyses L-cysteinyl-[prolipoprotein] + a 1,2-diacyl-sn-glycero-3-phospho-(1'-sn-glycerol) = an S-1,2-diacyl-sn-glyceryl-L-cysteinyl-[prolipoprotein] + sn-glycerol 1-phosphate + H(+). The protein operates within protein modification; lipoprotein biosynthesis (diacylglyceryl transfer). In terms of biological role, catalyzes the transfer of the diacylglyceryl group from phosphatidylglycerol to the sulfhydryl group of the N-terminal cysteine of a prolipoprotein, the first step in the formation of mature lipoproteins. This Cupriavidus necator (strain ATCC 17699 / DSM 428 / KCTC 22496 / NCIMB 10442 / H16 / Stanier 337) (Ralstonia eutropha) protein is Phosphatidylglycerol--prolipoprotein diacylglyceryl transferase.